We begin with the raw amino-acid sequence, 202 residues long: NADH-quinone oxidoreductase subunit C (202 aa).

The protein belongs to the complex I 30 kDa subunit family. As to quaternary structure, NDH-1 is composed of 14 different subunits. Subunits NuoB, C, D, E, F, and G constitute the peripheral sector of the complex.

The protein localises to the cell inner membrane. The catalysed reaction is a quinone + NADH + 5 H(+)(in) = a quinol + NAD(+) + 4 H(+)(out). Its function is as follows. NDH-1 shuttles electrons from NADH, via FMN and iron-sulfur (Fe-S) centers, to quinones in the respiratory chain. The immediate electron acceptor for the enzyme in this species is believed to be ubiquinone. Couples the redox reaction to proton translocation (for every two electrons transferred, four hydrogen ions are translocated across the cytoplasmic membrane), and thus conserves the redox energy in a proton gradient. In Hyphomonas neptunium (strain ATCC 15444), this protein is NADH-quinone oxidoreductase subunit C.